A 341-amino-acid chain; its full sequence is Protein arginine N-methyltransferase 1 (341 aa).

An SAM-dependent MTase PRMT-type domain is found at 20-315 (ADYYFDSYSH…DCAPFDKNQR (296 aa)). S-adenosyl-L-methionine is bound by residues His33, Arg42, Gly66, Asp88, and Glu117. Catalysis depends on residues Glu132 and Glu141.

It belongs to the class I-like SAM-binding methyltransferase superfamily. Protein arginine N-methyltransferase family.

The protein resides in the nucleus. It is found in the cytoplasm. Its subcellular location is the cytosol. It catalyses the reaction L-arginyl-[protein] + 2 S-adenosyl-L-methionine = N(omega),N(omega)-dimethyl-L-arginyl-[protein] + 2 S-adenosyl-L-homocysteine + 2 H(+). It carries out the reaction L-arginyl-[protein] + S-adenosyl-L-methionine = N(omega)-methyl-L-arginyl-[protein] + S-adenosyl-L-homocysteine + H(+). In terms of biological role, arginine methyltransferase that methylates the guanidino nitrogens of arginyl residues present in proteins such as ribonucleoproteins and histones. This chain is Protein arginine N-methyltransferase 1 (prmt1), found in Dictyostelium discoideum (Social amoeba).